Consider the following 179-residue polypeptide: ATP synthase subunit delta (179 aa).

It belongs to the ATPase delta chain family. In terms of assembly, F-type ATPases have 2 components, F(1) - the catalytic core - and F(0) - the membrane proton channel. F(1) has five subunits: alpha(3), beta(3), gamma(1), delta(1), epsilon(1). F(0) has three main subunits: a(1), b(2) and c(10-14). The alpha and beta chains form an alternating ring which encloses part of the gamma chain. F(1) is attached to F(0) by a central stalk formed by the gamma and epsilon chains, while a peripheral stalk is formed by the delta and b chains.

It is found in the cell membrane. Its function is as follows. F(1)F(0) ATP synthase produces ATP from ADP in the presence of a proton or sodium gradient. F-type ATPases consist of two structural domains, F(1) containing the extramembraneous catalytic core and F(0) containing the membrane proton channel, linked together by a central stalk and a peripheral stalk. During catalysis, ATP synthesis in the catalytic domain of F(1) is coupled via a rotary mechanism of the central stalk subunits to proton translocation. In terms of biological role, this protein is part of the stalk that links CF(0) to CF(1). It either transmits conformational changes from CF(0) to CF(1) or is implicated in proton conduction. This chain is ATP synthase subunit delta, found in Clostridium acetobutylicum (strain ATCC 824 / DSM 792 / JCM 1419 / IAM 19013 / LMG 5710 / NBRC 13948 / NRRL B-527 / VKM B-1787 / 2291 / W).